A 497-amino-acid polypeptide reads, in one-letter code: Serine hydroxymethyltransferase (497 aa).

(6S)-5,6,7,8-tetrahydrofolate-binding positions include L176 and 180–182 (GHL). Residue K289 is modified to N6-(pyridoxal phosphate)lysine. Residue E306 participates in (6S)-5,6,7,8-tetrahydrofolate binding.

The protein belongs to the SHMT family. In terms of assembly, homodimer. Pyridoxal 5'-phosphate serves as cofactor.

The protein resides in the cytoplasm. The enzyme catalyses (6R)-5,10-methylene-5,6,7,8-tetrahydrofolate + glycine + H2O = (6S)-5,6,7,8-tetrahydrofolate + L-serine. It functions in the pathway one-carbon metabolism; tetrahydrofolate interconversion. The protein operates within amino-acid biosynthesis; glycine biosynthesis; glycine from L-serine: step 1/1. Catalyzes the reversible interconversion of serine and glycine with tetrahydrofolate (THF) serving as the one-carbon carrier. This reaction serves as the major source of one-carbon groups required for the biosynthesis of purines, thymidylate, methionine, and other important biomolecules. Also exhibits THF-independent aldolase activity toward beta-hydroxyamino acids, producing glycine and aldehydes, via a retro-aldol mechanism. This is Serine hydroxymethyltransferase from Chlamydia pneumoniae (Chlamydophila pneumoniae).